The sequence spans 373 residues: 2-phosphonomethylmalate synthase (373 aa).

One can recognise a Pyruvate carboxyltransferase domain in the interval leucine 5–lysine 256.

The protein belongs to the alpha-IPM synthase/homocitrate synthase family.

It carries out the reaction 3-phosphonopyruvate + acetyl-CoA + H2O = (R)-2-(phosphonomethyl)malate + CoA + H(+). It participates in antibiotic biosynthesis. Its function is as follows. Acyltransferase involved in the biosynthesis of the phosphonate antibiotic FR-900098, a potent antimalarial agent that acts as an inhibitor of 1-deoxy-D-xylulose 5-phosphate reductoisomerase (DXR), the first enzyme in the nonmevalonate pathway for isoprenoid biosynthesis. Catalyzes the condensation between acetyl-CoA and phosphonopyruvate to yield (R)-2-(phosphonomethyl)malate. This chain is 2-phosphonomethylmalate synthase, found in Streptomyces rubellomurinus (strain ATCC 31215).